Consider the following 338-residue polypeptide: Glyceraldehyde-3-phosphate dehydrogenase (338 aa).

NAD(+) contacts are provided by residues 12–13 (RI), D34, and R79. D-glyceraldehyde 3-phosphate contacts are provided by residues 150–152 (SCT), T181, 210–211 (TG), and R233. The active-site Nucleophile is the C151. Position 315 (N315) interacts with NAD(+).

Belongs to the glyceraldehyde-3-phosphate dehydrogenase family. In terms of assembly, homotetramer.

The protein localises to the cytoplasm. The enzyme catalyses D-glyceraldehyde 3-phosphate + phosphate + NAD(+) = (2R)-3-phospho-glyceroyl phosphate + NADH + H(+). Its pathway is carbohydrate degradation; glycolysis; pyruvate from D-glyceraldehyde 3-phosphate: step 1/5. This chain is Glyceraldehyde-3-phosphate dehydrogenase (gpd-1), found in Neurospora crassa (strain ATCC 24698 / 74-OR23-1A / CBS 708.71 / DSM 1257 / FGSC 987).